A 3898-amino-acid chain; its full sequence is MELNHFELLYKTSKQKPVGVEEPVYDTAGRPLFGNPSEVHPQSTLKLPHDRGRGDIRTTLRDLPRKGDCRSGNHLGPVSGIYIKPGPVYYQDYTGPVYHRAPLEFFDEAQFCEVTKRIGRVTGSDGKLYHIYVCVDGCILLKLAKRGTPRTLKWIRNFTNCPLWVTSCSDDGASGSKDKKPDRMNKGKLKIAPREHEKDSKTKPPDATIVVEGVKYQIKKKGKVKGKNTQDGLYHNKNKPPESRKKLEKALLAWAVITILLYQPVAAENITQWNLSDNGTNGIQRAMYLRGVNRSLHGIWPEKICKGVPTHLATDTELKEIRGMMDASERTNYTCCRLQRHEWNKHGWCNWYNIDPWIQLMNRTQTNLTEGPPDKECAVTCRYDKNTDVNVVTQARNRPTTLTGCKKGKNFSFAGTVIEGPCNFNVSVEDILYGDHECGSLLQDTALYLLDGMTNTIENARQGAARVTSWLGRQLSTAGKKLERRSKTWFGAYALSPYCNVTRKIGYIWYTNNCTPACLPKNTKIIGPGKFDTNAEDGKILHEMGGHLSEFLLLSLVILSDFAPETASTLYLILHYAIPQSHEEPEGCDTNQLNLTVKLRTEDVVPSSVWNIGKYVCVRPDWWPYETKVALLFEEAGQVIKLVLRALRDLTRVWNSASTTAFLICLIKVLRGQVVQGIIWLLLVTGAQGRLACKEDYRYAISSTNEIGLLGAEGLTTTWKEYSHGLQLDDGTVKAVCTAGSFKVTALNVVSRRYLASLHKRALPTSVTFELLFDGTNPAIEEMDDDFGFGLCPFDTSPVIKGKYNTTLLNGSAFYLVCPIGWTGVVECTAVSPTTLRTEVVKTFRRDKPFPHRVDCVTTIVEKEDLFHCKLGGNWTCVKGDPVTYKGGQVKQCRWCGFEFKEPYGLPHYPIGKCILTNETGYRVVDSTDCNRDGVVISTEGEHECLIGNTTVKVHALDERLGPMPCRPKEIVSSEGPVRKTSCTFNYTKTLRNKYYEPRDSYFQQYMLKGEYQYWFNLDVTDHHTDYFAEFVVLVVVALLGGRYVLWLIVTYIILTEQLAAGLQLGQGEVVLIGNLITHTDNEVVVYFLLLYLVIRDEPIKKWILLLFHAMTNNPVKTITVALLMISGVAKGGKIDGGWQRQPVTSFDIQLALAVVVVVVMLLAKRDPTTFPLVITVATLRTAKITNGFSTDLVIATVSAALLTWTYISDYYKYKTWLQYLVSTVTGIFLIRVLKGIGELDLHAPTLPSHRPLFYILVYLISTAVVTRWNLDVAGLLLQCVPTLLMVFTMWADILTLILILPTYELTKLYYLKEVKIGAERGWLWKTNYKRVNDIYEVDQTSEGVYLFPSKQRTSAITSTMLPLIKAILISCISNKWQLIYLLYLIFEVSYYLHKKVIDEIAGGTNFVSRLVAALIEVNWAFDNEEVKGLKKFFLLSSRVKELIIKHKVRNEVVVRWFGDEEIYGMPKLIGLVKAATLSRNKHCMLCTVCEDRDWRGETCPKCGRFGPPVVCGMTLADFEEKHYKRIFIREDQSGGPLREEHAGYLQYKARGQLFLRNLPVLATKVKMLLVGNLGTEIGDLEHLGWVLRGPAVCKKVTEHERCTTSIMDKLTAFFGVMPRGTTPRAPVRFPTSLLKIRRGLETGWAYTHQGGISSVDHVTCGKDLLVCDTMGRTRVVCQSNNKMTDESEYGVKTDSGCPEGARCYVFNPEAVNISGTKGAMVHLQKTGGEFTCVTASGTPAFFDLKNLKGWSGLPIFEASSGRVVGRVKVGKNEDSKPTKLMSGIQTVSKSATDLTEMVKKITTMNRGEFRQITLATGAGKTTELPRSVIEEIGRHKRVLVLIPLRAAAESVYQYMRQKHPSIAFNLRIGEMKEGDMATGITYASYGYFCQMSQPKLRAAMVEYSFIFLDEYHCATPEQLAIMGKIHRFSENLRVVAMTATPAGTVTTTGQKHPIEEFIAPEVMKGEDLGSEYLDIAGLKIPVEEMKNNMLVFVPTRNMAVEAAKKLKAKGYNSGYYYSGEDPSNLRVVTSQSPYVVVATNAIESGVTLPDLDVVVDTGLKCEKRIRLSPKMPFIVTGLKRMAVTIGEQAQRRGRVGRVKPGRYYRSQETPVGSKDYHYDLLQAQRYGIEDGINITKSFREMNYDWSLYEEDSLMITQLEILNNLLISEELPMAVKNIMARTDHPEPIQLAYNSYETQVPVLFPKIRNGEVTDTYDNYTFLNARKLGDDVPPYVYATEDEDLAVELLGLDWPDPGNQGTVEAGRALKQVVGLSTAENALLVALFGYVGYQALSKRHIPVVTDIYSVEDHRLEDTTHLQYAPNAIKTEGKETELKELAQGDVQRCVEAVTNYAREGIQFMKSQALKVRETPTYKETMNTVADYVKKFIEALTDSKEDIIKYGLWGAHTALYKSIGARLGHETAFATLVVKWLAFGGESISDHIKQAATDLVVYYIINRPQFPGDTETQQEGRKFVASLLVSALATYTYKSWNYNNLSKIVEPALATLPYAAKALKLFAPTRLESVVILSTAIYKTYLSIRRGKSDGLLGTGVSAAMEIMSQNPVSVGIAVMLGVGAVAAHNAIEASEQKRTLLMKVFVKNFLDQAATDELVKESPEKIIMALFEAVQTVGNPLRLVYHLYGVFYKGWEAKELAQRTAGRNLFTLIMFEAVELLGVDSEGKIRQLSSNYILELLYKFRDNIKSSVREIAISWAPAPFSCDWTPTDDRIGLPHENYLRVETKCPCGYRMKAVKNCAGELRLLEEGGSFLCRNKFGRGSQNYRVTKYYDDNLSEIKPVIRMEGHVELYYKGATIKLDFNNSKTVLATDKWEVDHSTLVRALKRYTGAGYRGAYLGEKPNHKHLIQRDCATITKDKVCFIKMKRGCAFTYDLSLHNLTRLIELVHKNNLEDREIPAVTVTTWLAYTFVNEDIGTIKPTFGEKVTPEKQEEVVLQPAVVVDTTDVAVTVVGETSTMTTGETPTTFTSLGSDSKVRQVLKLGVDDGQYPGPNQQRASLLEAIQGVDERPSVLILGSDKATSNRVKTAKNVKIYRSRDPLELREMMKRGKILVVALSRVDTALLKFVDYKGTFLTRETLEALSLGKPKKRDITKAEAQWLLRLEDQIEELPDWFAAKEPIFLEANIKRDKYHLVGDIATIKEKAKQLGATDSTKISKEVGAKVYSMKLSNWVIQEENKQGSLAPLFEELLQQCPPGGQNKTTHMVSAYQLAQGNWVPVSCHVFMGTIPARRTKTHPYEAYVKLRELVDEHKMKALCGGSGLSKHNEWVIGKVKYQGNLRTKHMLNPGKVAEQLHREGYRHNVYNKTIGSVMTATGIRLEKLPVVRAQTDTTNFHQAIRDKIDKEENLQTPGLHKKLMEVFNALKRPELEASYDAVDWEELERGINRKGAAGFFERKNIGEVLDSEKNKVEEVIDSLKKGRNIRYYETAIPKNEKRDVNDDWTAGDFVDEKKPRVIQYPEAKTRLAITKVMYKWVKQKPVVIPGYEGKTPLFQIFDKVKKEWDQFQNPVAVSFDTKAWDTQVTTRDLELIRDIQKFYFKKKWHKFIDTLTKHMSEVPVISADGEVYIRKGQRGSGQPDTSAGNSMLNVLTMVYAFCEATGVPYKSFDRVAKIHVCGDDGFLITERALGEKFASKGVQILYEAGKPQKITEGDKMKVAYQFDDIEFCSHTPVQVRWSDNTSSYMPGRNTTTILAKMATRLDSSGERGTIAYEKAVAFSFLLMYSWNPLIRRICLLVLSTELQVRPGKSTTYYYEGDPISAYKEVIGHNLFDLKRTSFEKLAKLNLSMSTLGVWTRHTSKRLLQDCVNVGTKEGNWLVNADRLVSSKTGNRYIPGEGHTLQGKHYEELILARKPIGNFEGTDRYNLGPIVNVVLRRLKIMMMALIGRGV.

Residues 1-168 (MELNHFELLY…TNCPLWVTSC (168 aa)) enclose the Peptidase C53 domain. Residues Glu22, His49, and Cys69 each act as for N-terminal protease activity in the active site. Positions 32 to 54 (LFGNPSEVHPQSTLKLPHDRGRG) are disordered. A zinc-binding TRASH domain region spans residues 112 to 138 (CEVTKRIGRVTGSDGKLYHIYVCVDGC). N-linked (GlcNAc...) asparagine; by host glycosylation is present at Asn157. Disordered regions lie at residues 170–206 (DDGA…KPPD) and 221–242 (KGKV…KPPE). 2 stretches are compositionally biased toward basic and acidic residues: residues 176-185 (SKDKKPDRMN) and 192-204 (APRE…KTKP). N-linked (GlcNAc...) asparagine; by host glycosylation is found at Asn269, Asn274, Asn278, Asn293, and Asn332. 2 cysteine pairs are disulfide-bonded: Cys305–Cys349 and Cys335–Cys336. 2 N-linked (GlcNAc...) asparagine; by host glycosylation sites follow: Asn362 and Asn367. Disulfide bonds link Cys377/Cys422 and Cys381/Cys405. N-linked (GlcNAc...) asparagine; by host glycans are attached at residues Asn410, Asn425, Asn500, and Asn594. An intrachain disulfide couples Cys693 to Cys737. Residues Asn805, Asn810, Asn874, Asn918, Asn949, and Asn986 are each glycosylated (N-linked (GlcNAc...) asparagine; by host). 9 helical membrane-spanning segments follow: residues 1031–1051 (FVVL…LIVT), 1070–1090 (VVLI…YFLL), 1104–1124 (ILLL…VALL), 1140–1164 (QRQP…MLLA), 1189–1209 (FSTD…TYIS), 1217–1237 (WLQY…LKGI), 1247–1267 (LPSH…AVVT), 1281–1301 (VPTL…ILIL), and 1360–1380 (TMLP…WQLI). The region spanning 1441–1589 (KELIIKHKVR…DLEHLGWVLR (149 aa)) is the Peptidase C74 domain. Catalysis depends on for cysteine protease NS2 activity residues His1447, Glu1461, and Cys1512. Residues 1568–1588 (MLLVGNLGTEIGDLEHLGWVL) traverse the membrane as a helical segment. A Peptidase S31 domain is found at 1590–1763 (GPAVCKKVTE…LPIFEASSGR (174 aa)). Active-site charge relay system; for serine protease NS3 activity residues include His1658 and Asp1695. An N-linked (GlcNAc...) asparagine; by host glycan is attached at Asn1713. The active-site Charge relay system; for serine protease NS3 activity is Ser1752. Positions 1802-1960 (ITTMNRGEFR…QKHPIEEFIA (159 aa)) constitute a Helicase ATP-binding domain. Position 1815–1822 (1815–1822 (LATGAGKT)) interacts with ATP. The DEAH box motif lies at 1910 to 1913 (DEYH). The Helicase C-terminal domain maps to 1978 to 2179 (GLKIPVEEMK…ELPMAVKNIM (202 aa)). N-linked (GlcNAc...) asparagine; by host glycans are attached at residues Asn2134, Asn2217, Asn2494, Asn2787, Asn2815, Asn2891, Asn3211, and Asn3316. Residues Thr3500 and Leu3502 each coordinate GTP. In terms of domain architecture, RdRp catalytic spans 3519–3642 (PVAVSFDTKA…ITERALGEKF (124 aa)). An N-linked (GlcNAc...) asparagine; by host glycan is attached at Asn3689. Residue Arg3697 participates in GTP binding. Asn3698 carries N-linked (GlcNAc...) asparagine; by host glycosylation. Lys3705 lines the GTP pocket. An N-linked (GlcNAc...) asparagine; by host glycan is attached at Asn3794.

The protein belongs to the pestivirus polyprotein family. In terms of assembly, interacts (via N-terminus) with host SP1; this interaction induces proteasomal degradation of SP1 with subsequent down-regulation of HDAC1 and ISG15 expression thereby counteracting the host innate immunity. Interacts (via C-terminus) with host IRF3. Interacts with host OS9. As to quaternary structure, homodimer; disulfide-linked. Interacts with host RPSA. In terms of assembly, homodimer; disulfide-linked. Heterodimer with E1; disulfide-linked. Homodimer; disulfide-linked. Heterodimer with E1; disulfide-linked. Interacts with host TRX2. Interacts with host receptor ADAM17 (via metalloproteinase domain); this interaction allows binding and probably entry of the virus into the host cell. Interacts with host ANXA2; this interaction allows binding and probably entry of the virus into the host cell. Interacts with host MERTK; this interaction allows binding and probably entry of the virus into the host cell. As to quaternary structure, interacts with host TRAF6; this interaction inhibits host NF-kappa-B pathway. Interacts with NS5B; this interaction enhances RNA-dependent RNA polymerase activity. Interacts with protein NS4A. In terms of assembly, interacts with host RAB5, this interaction facilitates the formation of NS4B-related complex. Interacts with host FTH1; this interaction plays a positive role in viral anti-apoptosis. Interacts with RNA-directed RNA polymerase. Interacts with host RSAD2; this interaction inhibits viral replication. As to quaternary structure, interacts with NS5A; this interaction promotes viral replication. In terms of processing, heavily glycosylated. The viral RNA of pestiviruses is expressed as a single polyprotein which undergoes post-translational proteolytic processing resulting in the production of at least eleven individual proteins. The N-terminal protease cleaves itself from the nascent polyprotein autocatalytically and thereby generates the N-terminus of the adjacent viral capsid protein C. Post-translationally, cleavage between E2 and p7 is partial.

The protein localises to the host cytoplasm. It localises to the virion. The protein resides in the host cell membrane. Its subcellular location is the virion membrane. It is found in the host cell surface. The protein localises to the host membrane. It catalyses the reaction Leu is conserved at position P1 for all four cleavage sites. Alanine is found at position P1' of the NS4A-NS4B cleavage site, whereas serine is found at position P1' of the NS3-NS4A, NS4B-NS5A and NS5A-NS5B cleavage sites.. The catalysed reaction is RNA(n) + a ribonucleoside 5'-triphosphate = RNA(n+1) + diphosphate. The enzyme catalyses a ribonucleoside 5'-triphosphate + H2O = a ribonucleoside 5'-diphosphate + phosphate + H(+). It carries out the reaction ATP + H2O = ADP + phosphate + H(+). In terms of biological role, leader cysteine autoprotease that cleaves itself from the nascent polyprotein during translation of the viral mRNA. Once released, plays a role in the inhibition of host innate immune response by interacting with host IRF3 and inducing its proteasomal degradation. Its function is as follows. Packages viral RNA to form a viral nucleocapsid and thereby protects viral RNA. Also plays a role in transcription regulation. Protects the incoming virus against IFN-induced effectors. Functionally, plays a role in viral entry. Interacts with host RPSA that acts as a cellular attachment receptor for the virus. Also possesses intrinsic ribonuclease (RNase) activity that can inhibit the production of type I interferon and assist in the development of persistent infections. Cleaves preferentially NpU bonds. Binds to heparan sulfate on the host cells for entry. Plays a role in cell attachment and subsequent fusion of viral and cellular membranes. Therefore, mediates together with envelope glycoprotein E2 the viral entry. In terms of biological role, plays a role in cell attachment and subsequent fusion of viral and cellular membranes. Therefore, mediates together with envelope glycoprotein E1 the viral entry. Binds to host ADAM17 receptor for entry. Binds to host ANXA2 for entry. Binds to host MERTK for entry. Its function is as follows. Plays an essential role in the virus replication cycle by acting as a viroporin. Forms ion conductive pores, which alters the cell permeability allowing the transport of ions and other small molecules. Functionally, autoprotease that associates with the host chaperone JIV and cleaves the NS2-3 protein between NS2 and NS3. Also plays a role in the formation of infectious particles. Plays a role in the regulation of viral RNA replication. In terms of biological role, multifunctional protein that contains an N-terminal protease and a C-terminal helicase, playing essential roles in viral polyprotein processing and viral genome replication. The chymotrypsin-like serine protease activity utilizes NS4A as an essential cofactor and catalyzes the cleavage of the polyprotein leading to the release of NS4A, NS4B, NS5A, and NS5B. Plays a role in the inhibition of host NF-kappa-B activation by interacting with and inhibiting host TRAF6. Interacts with NS5B to enhance RNA-dependent RNA polymerase activity. Its function is as follows. Acts as a cofactor for the NS3 protease activity. Functionally, induces a specific membrane alteration that serves as a scaffold for the virus replication complex. Antagonizes host cell apoptosis by interacting with host ferritin heavy chain. The ORF4 protein physically binds host FTH1/FHC, resulting in the reduction of FTH1 protein levels in host cells. Reduction of FTH1 concentration further inhibits the accumulation of reactive oxygen in host cells, leading to reduced apoptosis. Regulates viral RNA replication by interacting with the 3'-untranslated region of viral RNA in a dose-dependent manner. At small concentrations promotes viral synthesis by interacting with the polymerase NS5B while at large concentrations, inhibits replication. In terms of biological role, replicates the viral (+) and (-) genome. The polypeptide is Genome polyprotein (Classical swine fever virus (strain Alfort/Tuebingen) (CSFV)).